We begin with the raw amino-acid sequence, 1106 residues long: Probable LRR receptor-like serine/threonine-protein kinase At1g74360 (1106 aa).

An N-terminal signal peptide occupies residues 1 to 34; the sequence is MTMVTRVIMTDDDSQSLCFLCFLLFFFITAIAVA. At 35 to 736 the chain is on the extracellular side; the sequence is GDSLDSDREV…PRTLLLIWIS (702 aa). 7 LRR repeats span residues 86–109, 110–134, 136–156, 157–182, 184–204, 205–226, and 227–250; these read RSRV…NFSA, LTEL…LSRC, NLKH…LPGL, SNLE…LFCN, LVVA…IFNG, CRNL…WTGF, and GRLV…MFRG. Residues N93 and N106 are each glycosylated (N-linked (GlcNAc...) asparagine). N-linked (GlcNAc...) asparagine glycosylation occurs at N141. Residues N188 and N193 are each glycosylated (N-linked (GlcNAc...) asparagine). N-linked (GlcNAc...) asparagine glycans are attached at residues N242 and N251. LRR repeat units lie at residues 252 to 275, 276 to 299, 300 to 323, 325 to 346, 348 to 371, 372 to 396, 398 to 419, 420 to 443, 445 to 468, 470 to 492, 566 to 593, 594 to 617, 619 to 640, 641 to 664, and 666 to 690; these read CTLQ…VSNC, QNLN…IGSI, SSLK…LLNL, NLVF…IFGR, TQVK…NILK, LPNL…ISQI, SLKF…EYGN, MPGL…SFGK, TSLL…IGNC, SLLW…LTRM, VRTL…ISQM, DRLS…IGQL, LAFL…IGNL, KCLQ…LNDL, and ELSK…QVAT. 2 N-linked (GlcNAc...) asparagine glycosylation sites follow: N309 and N322. Residues N365, N374, N384, and N408 are each glycosylated (N-linked (GlcNAc...) asparagine). Residues N454 and N467 are each glycosylated (N-linked (GlcNAc...) asparagine). 6 N-linked (GlcNAc...) asparagine glycosylation sites follow: N623, N628, N652, N671, N709, and N713. Residues 737 to 757 form a helical membrane-spanning segment; sequence LALALAFIACLVVSGIVLMVV. The Cytoplasmic segment spans residues 758-1106; that stretch reads KASREAEIDL…GLSSQGYIEM (349 aa). A phosphothreonine mark is found at T803 and T811. Residues 814 to 1095 enclose the Protein kinase domain; that stretch reads FSEERVVGRG…VKISGKAELF (282 aa). Residues 820-828 and K842 contribute to the ATP site; that span reads VGRGGYGTV. The Proton acceptor role is filled by D941. Phosphotyrosine is present on Y983. T991 is subject to Phosphothreonine.

It belongs to the protein kinase superfamily. Ser/Thr protein kinase family.

Its subcellular location is the mitochondrion membrane. It catalyses the reaction L-seryl-[protein] + ATP = O-phospho-L-seryl-[protein] + ADP + H(+). The catalysed reaction is L-threonyl-[protein] + ATP = O-phospho-L-threonyl-[protein] + ADP + H(+). The chain is Probable LRR receptor-like serine/threonine-protein kinase At1g74360 from Arabidopsis thaliana (Mouse-ear cress).